Consider the following 400-residue polypeptide: S-adenosylmethionine sensor upstream of mTORC1 (400 aa).

Residues arginine 99, glycine 168, aspartate 186, aspartate 198, phenylalanine 199, and serine 240 each contribute to the S-adenosyl-L-methionine site.

This sequence belongs to the BMT2/SAMTOR family. Interacts with the GATOR1 complex; interaction is disrupted when samtor binds S-adenosyl-L-methionine. Interacts with the KICSTOR complex; interaction is disrupted when samtor binds S-adenosyl-L-methionine.

Its function is as follows. S-adenosyl-L-methionine-binding protein that acts as an inhibitor of mTORC1 signaling via interaction with the GATOR1 and KICSTOR complexes. Acts as a sensor of S-adenosyl-L-methionine to signal methionine sufficiency to mTORC1: in presence of methionine, binds S-adenosyl-L-methionine, leading to disrupt interaction with the GATOR1 and KICSTOR complexes and promote mTORC1 signaling. Upon methionine starvation, S-adenosyl-L-methionine levels are reduced, thereby promoting the association with GATOR1 and KICSTOR, leading to inhibit mTORC1 signaling. Probably also acts as a S-adenosyl-L-methionine-dependent methyltransferase. This chain is S-adenosylmethionine sensor upstream of mTORC1, found in Xenopus tropicalis (Western clawed frog).